The chain runs to 348 residues: 4-hydroxyphenylpyruvate dioxygenase (348 aa).

VOC domains follow at residues 11 to 141 (GFAF…ITSS) and 151 to 303 (AIDH…IFTE). The Fe cation site is built by histidine 154, histidine 232, and glutamate 312.

This sequence belongs to the 4HPPD family. Fe cation serves as cofactor.

The enzyme catalyses 3-(4-hydroxyphenyl)pyruvate + O2 = homogentisate + CO2. Its function is as follows. Catalyzes the transformation of p-hydroxyphenylpyruvate into HGA. Has hemolytic and brown pigment production activity. This is 4-hydroxyphenylpyruvate dioxygenase (lly) from Legionella pneumophila (strain Corby).